The chain runs to 102 residues: Putative peripheral benzodiazepine receptor-related protein (102 aa).

Ubiquitous.

In Homo sapiens (Human), this protein is Putative peripheral benzodiazepine receptor-related protein (TSPO).